The sequence spans 654 residues: 4-hydroxy-3-methylbut-2-en-1-yl diphosphate synthase (flavodoxin) (654 aa).

[4Fe-4S] cluster contacts are provided by Cys557, Cys560, Cys591, and Glu598.

Belongs to the IspG family. It depends on [4Fe-4S] cluster as a cofactor.

The catalysed reaction is (2E)-4-hydroxy-3-methylbut-2-enyl diphosphate + oxidized [flavodoxin] + H2O + 2 H(+) = 2-C-methyl-D-erythritol 2,4-cyclic diphosphate + reduced [flavodoxin]. It functions in the pathway isoprenoid biosynthesis; isopentenyl diphosphate biosynthesis via DXP pathway; isopentenyl diphosphate from 1-deoxy-D-xylulose 5-phosphate: step 5/6. In terms of biological role, converts 2C-methyl-D-erythritol 2,4-cyclodiphosphate (ME-2,4cPP) into 1-hydroxy-2-methyl-2-(E)-butenyl 4-diphosphate. This chain is 4-hydroxy-3-methylbut-2-en-1-yl diphosphate synthase (flavodoxin), found in Protochlamydia amoebophila (strain UWE25).